The sequence spans 87 residues: Large ribosomal subunit protein bL27c (87 aa).

A disordered region spans residues 1–20 (MAHKKGSGSTKNGRDSRSQR).

This sequence belongs to the bacterial ribosomal protein bL27 family.

The protein resides in the plastid. It localises to the chloroplast. In Gracilaria tenuistipitata var. liui (Red alga), this protein is Large ribosomal subunit protein bL27c.